The chain runs to 377 residues: Nitric oxide reductase FlRd-NAD(+) reductase (377 aa).

Belongs to the FAD-dependent oxidoreductase family. It depends on FAD as a cofactor.

The protein localises to the cytoplasm. The catalysed reaction is 2 reduced [nitric oxide reductase rubredoxin domain] + NAD(+) + H(+) = 2 oxidized [nitric oxide reductase rubredoxin domain] + NADH. The protein operates within nitrogen metabolism; nitric oxide reduction. Functionally, one of at least two accessory proteins for anaerobic nitric oxide (NO) reductase. Reduces the rubredoxin moiety of NO reductase. The sequence is that of Nitric oxide reductase FlRd-NAD(+) reductase from Shigella flexneri serotype 5b (strain 8401).